The sequence spans 91 residues: Small ribosomal subunit protein bS20 (91 aa).

This sequence belongs to the bacterial ribosomal protein bS20 family.

Its function is as follows. Binds directly to 16S ribosomal RNA. This is Small ribosomal subunit protein bS20 from Wolinella succinogenes (strain ATCC 29543 / DSM 1740 / CCUG 13145 / JCM 31913 / LMG 7466 / NCTC 11488 / FDC 602W) (Vibrio succinogenes).